Reading from the N-terminus, the 369-residue chain is Glutamate 5-kinase (369 aa).

Lys8 serves as a coordination point for ATP. The substrate site is built by Ser49, Asp136, and Asn148. ATP is bound by residues 168 to 169 (TD) and 211 to 217 (TGGMATK). A PUA domain is found at 276 to 354 (TGKLYLDSGA…DEISQILGYG (79 aa)).

The protein belongs to the glutamate 5-kinase family.

Its subcellular location is the cytoplasm. It catalyses the reaction L-glutamate + ATP = L-glutamyl 5-phosphate + ADP. It participates in amino-acid biosynthesis; L-proline biosynthesis; L-glutamate 5-semialdehyde from L-glutamate: step 1/2. Its function is as follows. Catalyzes the transfer of a phosphate group to glutamate to form L-glutamate 5-phosphate. This chain is Glutamate 5-kinase, found in Rippkaea orientalis (strain PCC 8801 / RF-1) (Cyanothece sp. (strain PCC 8801)).